We begin with the raw amino-acid sequence, 315 residues long: ATP synthase gamma chain (315 aa).

This sequence belongs to the ATPase gamma chain family. In terms of assembly, F-type ATPases have 2 components, CF(1) - the catalytic core - and CF(0) - the membrane proton channel. CF(1) has five subunits: alpha(3), beta(3), gamma(1), delta(1), epsilon(1). CF(0) has three main subunits: a, b and c.

The protein resides in the cellular thylakoid membrane. Produces ATP from ADP in the presence of a proton gradient across the membrane. The gamma chain is believed to be important in regulating ATPase activity and the flow of protons through the CF(0) complex. This Microcystis aeruginosa (strain NIES-843 / IAM M-2473) protein is ATP synthase gamma chain.